Here is a 215-residue protein sequence, read N- to C-terminus: Flavin-dependent thymidylate synthase (215 aa).

A ThyX domain is found at 1–215; the sequence is MDVRFISLTK…FPTVAAALEW (215 aa). Residues Ser56, 79 to 81, and Glu87 each bind FAD; that span reads RHR. DUMP-binding positions include 76–79, 87–91, and Arg155; these read QILR and EFSLR. The ThyX motif signature appears at 79 to 89; that stretch reads RHRSFSFQEFS. His177 contacts FAD. Arg182 provides a ligand contact to dUMP. The active-site Involved in ionization of N3 of dUMP, leading to its activation is the Arg182.

The protein belongs to the thymidylate synthase ThyX family. As to quaternary structure, homotetramer. FAD is required as a cofactor.

It carries out the reaction dUMP + (6R)-5,10-methylene-5,6,7,8-tetrahydrofolate + NADPH + H(+) = dTMP + (6S)-5,6,7,8-tetrahydrofolate + NADP(+). It participates in pyrimidine metabolism; dTTP biosynthesis. Functionally, catalyzes the reductive methylation of 2'-deoxyuridine-5'-monophosphate (dUMP) to 2'-deoxythymidine-5'-monophosphate (dTMP) while utilizing 5,10-methylenetetrahydrofolate (mTHF) as the methyl donor, and NADPH and FADH(2) as the reductant. This is Flavin-dependent thymidylate synthase from Synechocystis sp. (strain ATCC 27184 / PCC 6803 / Kazusa).